A 72-amino-acid chain; its full sequence is Large ribosomal subunit protein uL29 (72 aa).

This sequence belongs to the universal ribosomal protein uL29 family.

The sequence is that of Large ribosomal subunit protein uL29 from Prochlorococcus marinus (strain MIT 9215).